A 270-amino-acid chain; its full sequence is Gap junction beta-3 protein (270 aa).

Over 1 to 20 the chain is Cytoplasmic; it reads MDWKTLQALLSGVNKYSTAF. A helical transmembrane segment spans residues 21 to 40; it reads GRIWLSVVFVFRVLVYVVAA. Over 41 to 75 the chain is Extracellular; the sequence is ERVWGDEQKDFDCNTKQPGCTNVCYDNYFPISNIR. Residues 76–98 traverse the membrane as a helical segment; that stretch reads LWALQLIFVTCPSLLVILHVAYR. The Cytoplasmic portion of the chain corresponds to 99 to 126; that stretch reads EERERRHRQKHGDQCAKLYDNAGKKHGG. The chain crosses the membrane as a helical span at residues 127-149; it reads LWWTYLFSLIFKLIIEFLFLYLL. Residues 150–187 lie on the Extracellular side of the membrane; the sequence is HTLWHGFNMPRLVQCANVAPCPNIVDCYIARPTEKKIF. Residues 188-210 form a helical membrane-spanning segment; that stretch reads TYFMVGASAVCIVLTICELCYLI. Topologically, residues 211–270 are cytoplasmic; that stretch reads CHRVLRGLHKDKPRGGCSPSSSASRASTCRCHHKLVEAGEVDPDPGNNKLQASAPNLTPI. The interval 250–270 is disordered; sequence EVDPDPGNNKLQASAPNLTPI. Polar residues predominate over residues 258–270; sequence NKLQASAPNLTPI.

The protein belongs to the connexin family. Beta-type (group I) subfamily. A connexon is composed of a hexamer of connexins. Interacts with CNST.

It localises to the cell membrane. The protein localises to the cell junction. It is found in the gap junction. One gap junction consists of a cluster of closely packed pairs of transmembrane channels, the connexons, through which materials of low MW diffuse from one cell to a neighboring cell. The sequence is that of Gap junction beta-3 protein (GJB3) from Homo sapiens (Human).